The following is a 333-amino-acid chain: Glyceraldehyde-3-phosphate dehydrogenase (333 aa).

An N-acetylserine modification is found at Ser1. NAD(+) contacts are provided by residues 10–11 (RI), Asp31, and Ser118. Residues 147–149 (SCT), Thr178, 207–208 (TG), and Arg230 each bind D-glyceraldehyde 3-phosphate. Cys148 functions as the Nucleophile in the catalytic mechanism. NAD(+) is bound at residue Asn312.

The protein belongs to the glyceraldehyde-3-phosphate dehydrogenase family. Homotetramer.

It is found in the cytoplasm. The catalysed reaction is D-glyceraldehyde 3-phosphate + phosphate + NAD(+) = (2R)-3-phospho-glyceroyl phosphate + NADH + H(+). It functions in the pathway carbohydrate degradation; glycolysis; pyruvate from D-glyceraldehyde 3-phosphate: step 1/5. The protein is Glyceraldehyde-3-phosphate dehydrogenase of Homarus americanus (American lobster).